A 231-amino-acid polypeptide reads, in one-letter code: Triggering receptor expressed on myeloid cells 1 (231 aa).

Residues 1–20 (MRKTRLWGLLWMFFVSELLA) form the signal peptide. Residues 21 to 202 (ATKLTEEKYE…TDIIRVPVFN (182 aa)) are Extracellular-facing. One can recognise an Ig-like V-type domain in the interval 26 to 131 (EEKYELKEGQ…LFDRIRLVVT (106 aa)). A disulfide bond links Cys41 and Cys110. 2 stretches are compositionally biased toward polar residues: residues 134–157 (SSGTPGSSENSTPNVYKTPPTTTK) and 164–182 (TSPTTVTQAPPKSTADVST). The interval 134-182 (SSGTPGSSENSTPNVYKTPPTTTKALRPLYTSPTTVTQAPPKSTADVST) is disordered. N-linked (GlcNAc...) asparagine glycosylation is found at Asn188 and Asn191. The helical transmembrane segment at 203–223 (IAILVAGGFLSKSLVFSVLFA) threads the bilayer. Topologically, residues 224–231 (VTLRSFVP) are cytoplasmic.

Monomer. Homomultimer; when activated. Interacts with TYROBP/DAP12. Interacts with TLR4.

It is found in the cell membrane. Cell surface receptor that plays important roles in innate and adaptive immunity by amplifying inflammatory responses. Upon activation by various ligands such as PGLYRP1, HMGB1 or HSP70, multimerizes and forms a complex with transmembrane adapter TYROBP/DAP12. In turn, initiates a SYK-mediated cascade of tyrosine phosphorylation, activating multiple downstream mediators such as BTK, MAPK1, MAPK3 or phospholipase C-gamma. This cascade promotes the neutrophil- and macrophage-mediated release of pro-inflammatory cytokines and/or chemokines, as well as their migration and thereby amplifies inflammatory responses that are triggered by bacterial and fungal infections. By also promoting the amplification of inflammatory signals that are initially triggered by Toll-like receptor (TLR) and NOD-like receptor engagement, plays a major role in the pathophysiology of acute and chronic inflammatory diseases of different etiologies including septic shock and atherosclerosis. The protein is Triggering receptor expressed on myeloid cells 1 (TREM1) of Pongo abelii (Sumatran orangutan).